The following is a 960-amino-acid chain: Angiomotin-like protein 1 (960 aa).

The segment at 196-248 (SQFFRGQQPPPPPPQQQPGAVGHSYYMAGGASQKARTEGRPTVSRANSGQAHK) is disordered. A phosphoserine mark is found at Ser-243, Ser-271, and Ser-297. Residues 261-281 (RSLSERIMQLSLERNGAKQHL) are a coiled coil. Disordered stretches follow at residues 277-317 (AKQH…EYPF), 381-407 (LPFP…LHSV), and 413-432 (PPMA…SQQL). Residues 388-401 (QQHSPVSSQNSSVS) show a composition bias toward low complexity. 2 coiled-coil regions span residues 440-641 (VERA…WLER) and 667-697 (ALME…VEES). A Phosphoserine modification is found at Ser-722. Positions 731 to 761 (SLEAHIWQEEEEVVQATRRCQDMEYTIKNLH) form a coiled coil. Positions 775–826 (QQRSRKDAGKTDSSSLRPARSVPSIAAATGTHSRQTSLTSSQLAEERKEEKT) are disordered. Phosphoserine occurs at positions 795, 807, and 830. Polar residues predominate over residues 804–817 (GTHSRQTSLTSSQL). The segment at 842–952 (NDHASTPLLP…NLLHKPEFPD (111 aa)) is disordered. The segment covering 845–870 (ASTPLLPTPSAATLSPPTPGTSASSA) has biased composition (low complexity). Over residues 898 to 911 (PTRSRLSGTPSNSP) the composition is skewed to polar residues. Ser-904 is modified (phosphoserine). At Thr-906 the chain carries Phosphothreonine. At Ser-910 the chain carries Phosphoserine. The short motif at 957 to 960 (EVLI) is the PDZ-binding element.

This sequence belongs to the angiomotin family. Post-translationally, polyubiquitinated by NEDD4, leading to proteasomal degradation.

The protein resides in the cell junction. Its subcellular location is the tight junction. In terms of biological role, inhibits the Wnt/beta-catenin signaling pathway, probably by recruiting CTNNB1 to recycling endosomes and hence preventing its translocation to the nucleus. The sequence is that of Angiomotin-like protein 1 (AMOTL1) from Bos taurus (Bovine).